Here is a 357-residue protein sequence, read N- to C-terminus: Undecaprenyl-phosphate alpha-N-acetylglucosaminyl 1-phosphate transferase (357 aa).

7 helical membrane-spanning segments follow: residues 40–60 (GAIPLIGGVSLFVGNLCFYLL), 64–84 (QMRLPTLYLFSIFVLLVIGMI), 124–144 (FQLTLGSIGLIITVLATIAAI), 183–203 (WSFALIIAILPYFMMNLGIPF), 209–229 (VFMGDAGSTLIGFTIIWILLL), 238–258 (MNPVTALWIIAIPLIDMIAIM), and 291–311 (FLLITFAAAICATIGILGEIF).

The protein belongs to the glycosyltransferase 4 family. WecA subfamily. Mg(2+) is required as a cofactor. It depends on Mn(2+) as a cofactor.

It is found in the cell inner membrane. The catalysed reaction is di-trans,octa-cis-undecaprenyl phosphate + UDP-N-acetyl-alpha-D-glucosamine = N-acetyl-alpha-D-glucosaminyl-di-trans,octa-cis-undecaprenyl diphosphate + UMP. It functions in the pathway bacterial outer membrane biogenesis; LPS O-antigen biosynthesis. Its function is as follows. Catalyzes the transfer of the GlcNAc-1-phosphate moiety from UDP-GlcNAc onto the carrier lipid undecaprenyl phosphate (C55-P), yielding GlcNAc-pyrophosphoryl-undecaprenyl (GlcNAc-PP-C55). The chain is Undecaprenyl-phosphate alpha-N-acetylglucosaminyl 1-phosphate transferase from Pasteurella multocida (strain Pm70).